The sequence spans 484 residues: Allantoinase, mitochondrial (484 aa).

Zn(2+)-binding residues include His-76, His-78, Lys-163, His-199, His-251, and Asp-324. Position 163 is an N6-carboxylysine (Lys-163).

Belongs to the metallo-dependent hydrolases superfamily. Allantoinase family. In terms of assembly, homotetramer. The cofactor is Zn(2+). Carboxylation allows a single lysine to coordinate two zinc ions. As to expression, liver and kidney.

Its subcellular location is the mitochondrion. The enzyme catalyses (S)-allantoin + H2O = allantoate + H(+). It participates in nitrogen metabolism; (S)-allantoin degradation; allantoate from (S)-allantoin: step 1/1. The polypeptide is Allantoinase, mitochondrial (ALN) (Aquarana catesbeiana (American bullfrog)).